A 50-amino-acid chain; its full sequence is Ampulexin 1 (50 aa).

The N-terminal stretch at methionine 1–proline 26 is a signal peptide.

Monomer. Expressed in venom sac and, to a lesser extent, in venom gland. Not expressed in brain.

The protein localises to the secreted. Amphipathic peptide which probably adopts an alpha-helical structure. When injected in subesophageal ganglia of cockroach P.americana, a natural host for larvae of A.compressa, dampens the escape response for about 1 hour which may contribute to early stages of hypokinesia. Has no antimicrobial activity against E.coli DH5alpha or B.thuringiensis. Is not cytotoxic in vitro. In Ampulex compressa (Emerald cockroach wasp), this protein is Ampulexin 1.